The sequence spans 1507 residues: Lhr helicase/ probable uracil glycosylase (1507 aa).

Positions 1–856 (MTTNGADPLG…ASLLFGYVGA (856 aa)) are lhr-Core. Residues F24, Q31, K54, and T55 each contribute to the ATP site. The Helicase ATP-binding domain occupies 35–226 (WSAISEGNNT…FLSGQAPTTI (192 aa)). R122, R131, T145, S148, and M152 together coordinate ssDNA. 2 residues coordinate ATP: D170 and E171. Positions 170 to 173 (DEVH) match the DEAH box motif. 3 residues coordinate ssDNA: S253, W255, and R279. Positions 257-451 (DVEERIVDLV…VLAQHTVAVA (195 aa)) constitute a Helicase C-terminal domain. 3 residues coordinate ATP: I377, R394, and H397. SsDNA-binding residues include K410, Q518, R519, I528, W597, D600, and R777. The segment at 436–529 (PANPLDVLAQ…LAVTSGGAIP (94 aa)) is WH domain. The interval 530–856 (DRGMFTVYLA…ASLLFGYVGA (327 aa)) is domain 4. Positions 857 to 1507 (FMYEGDSPLA…SRTPRGLRLR (651 aa)) are CTD.

The protein belongs to the Lhr helicase family. In terms of assembly, monomer. Homooligomerizes, possibly a homotetramer. The cofactor is Ca(2+).

It carries out the reaction Couples ATP hydrolysis with the unwinding of duplex DNA by translocating in the 3'-5' direction.. It catalyses the reaction ATP + H2O = ADP + phosphate + H(+). The enzyme catalyses Hydrolyzes single-stranded DNA or mismatched double-stranded DNA and polynucleotides, releasing free uracil.. Functionally, a 3'-5' helicase involved in repair of at least 3 types of DNA cross-links, mitomycin C (MMC), cisplatin, and psoralen-UVA. Translocates 3'-to-5' on single-stranded (ss)DNA, unwinding any encountered duplex nucleic acid. A 3'-ssDNA loading strand of at least 15 nucleotides is required for helicase activity. An RNA:DNA hybrid with a 3'-ssDNA loading strand is an 8-fold better helicase substrate than 3'-tailed double-stranded (ds)DNA; substrates where the helicase loads on a 3'-ssRNA tail (DNA:RNA and RNA:RNA) are not unwound. Only (d)ATP is hydrolyzed by the protein, which has no ATPase activity in the absence of ssDNA or ssRNA. Arg-279 and Trp-597 are needed to couple ATP hydrolysis to mechanical work; a salt bridge between Arg-280 and Glu-550 closes a clamp around the ssDNA that is not large enough for dsDNA, while Ile-528 wedges between bases of the loading strand. In terms of biological role, excises uracil residues from ssDNA. Uracil residues in DNA can arise as a result of misincorporation of dUMP residues by DNA polymerase or due to deamination of cytosine. This is Lhr helicase/ probable uracil glycosylase from Mycolicibacterium smegmatis (strain ATCC 700084 / mc(2)155) (Mycobacterium smegmatis).